We begin with the raw amino-acid sequence, 116 residues long: DNA-binding protein Tpen_0471 (116 aa).

Belongs to the PDCD5 family.

The protein is DNA-binding protein Tpen_0471 of Thermofilum pendens (strain DSM 2475 / Hrk 5).